A 461-amino-acid polypeptide reads, in one-letter code: Cysteine--tRNA ligase (461 aa).

Cysteine 28 contacts Zn(2+). Positions 30 to 40 (ITIYDLCHIGH) match the 'HIGH' region motif. Zn(2+)-binding residues include cysteine 209, histidine 234, and glutamate 238. Residues 266 to 270 (KMSKS) carry the 'KMSKS' region motif. Lysine 269 is an ATP binding site.

Belongs to the class-I aminoacyl-tRNA synthetase family. Monomer. Requires Zn(2+) as cofactor.

It is found in the cytoplasm. The enzyme catalyses tRNA(Cys) + L-cysteine + ATP = L-cysteinyl-tRNA(Cys) + AMP + diphosphate. This is Cysteine--tRNA ligase from Yersinia pseudotuberculosis serotype IB (strain PB1/+).